Consider the following 515-residue polypeptide: Protein FAM98A (515 aa).

Disordered stretches follow at residues 297–411 and 432–515; these read VLMG…YHGG and SGYQ…HYTS. The segment covering 302–311 has biased composition (basic and acidic residues); it reads VPDRGGRPNE. Residues 382 to 395 show a composition bias toward gly residues; sequence WTDGGSASGGGYQD. Over residues 444 to 456 the composition is skewed to basic and acidic residues; the sequence is RYQDGGHHGERGS. Residues 457–481 show a composition bias toward gly residues; it reads GRGGRGGRGGRGGRGSQGGGWGGRG. Positions 485–501 are enriched in low complexity; sequence YHQGGQFEQHFQHGGYQ. A compositionally biased stretch (polar residues) spans 502–515; that stretch reads YSHSGFGQGRHYTS.

It belongs to the FAM98 family. As to quaternary structure, interacts (via N- and C-terminus) with DDX1. Interacts (via N- and C-terminus) with C14orf166. Interacts with FAM98B. Interacts with PLEKHM1 (via N- and C-terminus).

Positively stimulates PRMT1-induced protein arginine methylation. Involved in skeletal homeostasis. Positively regulates lysosome peripheral distribution and ruffled border formation in osteoclasts. The protein is Protein FAM98A of Rattus norvegicus (Rat).